Here is a 156-residue protein sequence, read N- to C-terminus: 6,7-dimethyl-8-ribityllumazine synthase (156 aa).

5-amino-6-(D-ribitylamino)uracil contacts are provided by residues F23, 57–59, and 81–83; these read SFE and AVI. 86–87 provides a ligand contact to (2S)-2-hydroxy-3-oxobutyl phosphate; that stretch reads GT. H89 serves as the catalytic Proton donor. 5-amino-6-(D-ribitylamino)uracil is bound at residue F114. R128 provides a ligand contact to (2S)-2-hydroxy-3-oxobutyl phosphate.

The protein belongs to the DMRL synthase family. In terms of assembly, forms an icosahedral capsid composed of 60 subunits, arranged as a dodecamer of pentamers.

It catalyses the reaction (2S)-2-hydroxy-3-oxobutyl phosphate + 5-amino-6-(D-ribitylamino)uracil = 6,7-dimethyl-8-(1-D-ribityl)lumazine + phosphate + 2 H2O + H(+). It participates in cofactor biosynthesis; riboflavin biosynthesis; riboflavin from 2-hydroxy-3-oxobutyl phosphate and 5-amino-6-(D-ribitylamino)uracil: step 1/2. Functionally, catalyzes the formation of 6,7-dimethyl-8-ribityllumazine by condensation of 5-amino-6-(D-ribitylamino)uracil with 3,4-dihydroxy-2-butanone 4-phosphate. This is the penultimate step in the biosynthesis of riboflavin. This chain is 6,7-dimethyl-8-ribityllumazine synthase, found in Alkalilimnicola ehrlichii (strain ATCC BAA-1101 / DSM 17681 / MLHE-1).